Reading from the N-terminus, the 313-residue chain is L-lactate dehydrogenase 1 (313 aa).

Valine 15, aspartate 36, arginine 41, and tyrosine 66 together coordinate NAD(+). Residues glutamine 83, arginine 89, and 121–124 each bind substrate; that span reads NPVD. Residues 119 to 121 and serine 144 contribute to the NAD(+) site; that span reads ASN. 149 to 152 contacts substrate; the sequence is DTAR. 2 residues coordinate beta-D-fructose 1,6-bisphosphate: arginine 154 and histidine 169. Histidine 176 functions as the Proton acceptor in the catalytic mechanism. At tyrosine 218 the chain carries Phosphotyrosine. A substrate-binding site is contributed by threonine 227.

Belongs to the LDH/MDH superfamily. LDH family. Homotetramer.

It is found in the cytoplasm. The enzyme catalyses (S)-lactate + NAD(+) = pyruvate + NADH + H(+). It participates in fermentation; pyruvate fermentation to lactate; (S)-lactate from pyruvate: step 1/1. With respect to regulation, allosterically activated by fructose 1,6-bisphosphate (FBP). Catalyzes the conversion of lactate to pyruvate. This is L-lactate dehydrogenase 1 from Listeria innocua serovar 6a (strain ATCC BAA-680 / CLIP 11262).